We begin with the raw amino-acid sequence, 344 residues long: Trace amine-associated receptor 8b (344 aa).

Topologically, residues 1 to 31 (MTSNFSQPALQLCYENTNGSCIKTPYSPGPR) are extracellular. N-linked (GlcNAc...) asparagine glycosylation is found at Asn-4 and Asn-18. Disulfide bonds link Cys-21-Cys-185 and Cys-104-Cys-189. The chain crosses the membrane as a helical span at residues 32–52 (VILYMVFGFGAVLAVCGNLLV). Topologically, residues 53 to 67 (VISVLHFKQLHSPAN) are cytoplasmic. The helical transmembrane segment at 68–88 (FLIASLASADFLVGISVMPFS) threads the bilayer. The Extracellular portion of the chain corresponds to 89-111 (MVRSIESCWYFGDAFCSLHSCCD). The chain crosses the membrane as a helical span at residues 112-132 (VAFCYSSALHLCFISVDRYIA). The Cytoplasmic segment spans residues 133–146 (VTDPLVYPTKFTVS). The helical transmembrane segment at 147 to 167 (VSGICISISWILPLVYSSAVF) threads the bilayer. Residues 168–195 (YTGISAKGIESLVSALNCVGGCQIVVNQ) lie on the Extracellular side of the membrane. Residues 196 to 216 (DWVLIDFLLFFIPTLVMIILY) traverse the membrane as a helical segment. Over 217 to 260 (SKIFLVAKQQAVKIETSVSDNRGESSSESHKARVAKRERKAAKT) the chain is Cytoplasmic. A helical transmembrane segment spans residues 261-281 (LGVTVVAFMVSWLPYTIDSLV). Position 282 (Asp-282) is a topological domain, extracellular. A helical membrane pass occupies residues 283–303 (AFVGFITPAYVYEICCWSAYY). The Cytoplasmic portion of the chain corresponds to 304-344 (NSAMNPLIYAFFYPWFRKAIKLILSGEILKSHSSTMSLFSE).

It belongs to the G-protein coupled receptor 1 family. Specifically expressed in neurons of the olfactory epithelium.

It is found in the cell membrane. Olfactory receptor specific for trace amines. Trace amine compounds are enriched in animal body fluids and act on trace amine-associated receptors (TAARs) to elicit both intraspecific and interspecific innate behaviors. Ligand-binding causes a conformation change that triggers signaling via G alpha proteins, possibly G(i)/G(o) G alpha proteins. This is Trace amine-associated receptor 8b from Mus musculus (Mouse).